The following is a 367-amino-acid chain: Eukaryotic translation initiation factor 3 subunit H (367 aa).

The region spanning 14-166 is the MPN domain; that stretch reads VQVEALVVMK…LRAFRLSPTF (153 aa).

This sequence belongs to the eIF-3 subunit H family. As to quaternary structure, component of the eukaryotic translation initiation factor 3 (eIF-3) complex.

It is found in the cytoplasm. In terms of biological role, component of the eukaryotic translation initiation factor 3 (eIF-3) complex, which is involved in protein synthesis of a specialized repertoire of mRNAs and, together with other initiation factors, stimulates binding of mRNA and methionyl-tRNAi to the 40S ribosome. The eIF-3 complex specifically targets and initiates translation of a subset of mRNAs involved in cell proliferation. This Botryotinia fuckeliana (strain B05.10) (Noble rot fungus) protein is Eukaryotic translation initiation factor 3 subunit H.